The primary structure comprises 313 residues: D-alanine--D-alanine ligase (313 aa).

An ATP-grasp domain is found at 111–306 (KQVWHSLGLP…FQQLVLAILA (196 aa)). Position 137–192 (137–192 (AAELGFPLIVKPAHEGSSIGMAKVESVEALIAAWQDAARYDSQVLVEQWIAGPEYT)) interacts with ATP. Aspartate 260, glutamate 273, and asparagine 275 together coordinate Mg(2+).

The protein belongs to the D-alanine--D-alanine ligase family. Mg(2+) serves as cofactor. Requires Mn(2+) as cofactor.

The protein resides in the cytoplasm. The enzyme catalyses 2 D-alanine + ATP = D-alanyl-D-alanine + ADP + phosphate + H(+). The protein operates within cell wall biogenesis; peptidoglycan biosynthesis. In terms of biological role, cell wall formation. The sequence is that of D-alanine--D-alanine ligase from Ectopseudomonas mendocina (strain ymp) (Pseudomonas mendocina).